Here is a 368-residue protein sequence, read N- to C-terminus: Phosphoserine aminotransferase (368 aa).

Arg-42 serves as a coordination point for L-glutamate. Pyridoxal 5'-phosphate-binding positions include 76–77, Trp-102, Thr-152, Asp-179, and Gln-202; that span reads AS. Lys-203 carries the N6-(pyridoxal phosphate)lysine modification. A pyridoxal 5'-phosphate-binding site is contributed by 245–246; it reads NT.

The protein belongs to the class-V pyridoxal-phosphate-dependent aminotransferase family. SerC subfamily. Homodimer. It depends on pyridoxal 5'-phosphate as a cofactor.

The protein localises to the cytoplasm. It carries out the reaction O-phospho-L-serine + 2-oxoglutarate = 3-phosphooxypyruvate + L-glutamate. It catalyses the reaction 4-(phosphooxy)-L-threonine + 2-oxoglutarate = (R)-3-hydroxy-2-oxo-4-phosphooxybutanoate + L-glutamate. It participates in amino-acid biosynthesis; L-serine biosynthesis; L-serine from 3-phospho-D-glycerate: step 2/3. Its pathway is cofactor biosynthesis; pyridoxine 5'-phosphate biosynthesis; pyridoxine 5'-phosphate from D-erythrose 4-phosphate: step 3/5. Functionally, catalyzes the reversible conversion of 3-phosphohydroxypyruvate to phosphoserine and of 3-hydroxy-2-oxo-4-phosphonooxybutanoate to phosphohydroxythreonine. The chain is Phosphoserine aminotransferase from Nitrosomonas europaea (strain ATCC 19718 / CIP 103999 / KCTC 2705 / NBRC 14298).